Consider the following 529-residue polypeptide: 2-(3-amino-3-carboxypropyl)histidine synthase subunit 2-2 (529 aa).

3 residues coordinate [4Fe-4S] cluster: Cys130, Cys151, and Cys366.

This sequence belongs to the DPH1/DPH2 family. DPH2 subfamily. As to quaternary structure, component of the 2-(3-amino-3-carboxypropyl)histidine synthase complex composed of DPH1, DPH2, DPH3 and a NADH-dependent reductase, predominantly CBR1. [4Fe-4S] cluster is required as a cofactor.

The protein localises to the cytoplasm. It participates in protein modification; peptidyl-diphthamide biosynthesis. Its function is as follows. Required for the first step of diphthamide biosynthesis, a post-translational modification of histidine which occurs in elongation factor 2. DPH1 and DPH2 transfer a 3-amino-3-carboxypropyl (ACP) group from S-adenosyl-L-methionine (SAM) to a histidine residue, the reaction is assisted by a reduction system comprising DPH3 and a NADH-dependent reductase, predominantly CBR1. Facilitates the reduction of the catalytic iron-sulfur cluster found in the DPH1 subunit. The protein is 2-(3-amino-3-carboxypropyl)histidine synthase subunit 2-2 of Candida albicans (strain SC5314 / ATCC MYA-2876) (Yeast).